We begin with the raw amino-acid sequence, 377 residues long: Protein RecA (377 aa).

The segment covering 1 to 13 (MSNEGKPLQSTES) has biased composition (polar residues). The tract at residues 1–20 (MSNEGKPLQSTESTKIDAKS) is disordered. 82–89 (GPESSGKT) contributes to the ATP binding site. The segment at 346 to 377 (GSEVSANSMRPLASAARQASSRPKLSQVSANG) is disordered. Residues 362 to 377 (RQASSRPKLSQVSANG) show a composition bias toward polar residues.

This sequence belongs to the RecA family.

Its subcellular location is the cytoplasm. In terms of biological role, can catalyze the hydrolysis of ATP in the presence of single-stranded DNA, the ATP-dependent uptake of single-stranded DNA by duplex DNA, and the ATP-dependent hybridization of homologous single-stranded DNAs. It interacts with LexA causing its activation and leading to its autocatalytic cleavage. The sequence is that of Protein RecA from Prochlorococcus marinus (strain NATL1A).